The primary structure comprises 395 residues: NAD(P)H-quinone oxidoreductase subunit H, chloroplastic (395 aa).

The protein belongs to the complex I 49 kDa subunit family. NDH is composed of at least 16 different subunits, 5 of which are encoded in the nucleus.

Its subcellular location is the plastid. It localises to the chloroplast thylakoid membrane. The enzyme catalyses a plastoquinone + NADH + (n+1) H(+)(in) = a plastoquinol + NAD(+) + n H(+)(out). It carries out the reaction a plastoquinone + NADPH + (n+1) H(+)(in) = a plastoquinol + NADP(+) + n H(+)(out). In terms of biological role, NDH shuttles electrons from NAD(P)H:plastoquinone, via FMN and iron-sulfur (Fe-S) centers, to quinones in the photosynthetic chain and possibly in a chloroplast respiratory chain. The immediate electron acceptor for the enzyme in this species is believed to be plastoquinone. Couples the redox reaction to proton translocation, and thus conserves the redox energy in a proton gradient. In Coffea arabica (Arabian coffee), this protein is NAD(P)H-quinone oxidoreductase subunit H, chloroplastic.